We begin with the raw amino-acid sequence, 122 residues long: Large ribosomal subunit protein uL18 (122 aa).

A disordered region spans residues 1-24; that stretch reads MLKKADKNANRLQRHKRVRRKISG. Over residues 12–22 the composition is skewed to basic residues; the sequence is LQRHKRVRRKI.

Belongs to the universal ribosomal protein uL18 family. Part of the 50S ribosomal subunit; part of the 5S rRNA/L5/L18/L25 subcomplex. Contacts the 5S and 23S rRNAs.

Functionally, this is one of the proteins that bind and probably mediate the attachment of the 5S RNA into the large ribosomal subunit, where it forms part of the central protuberance. The protein is Large ribosomal subunit protein uL18 of Clostridioides difficile (strain 630) (Peptoclostridium difficile).